The following is a 647-amino-acid chain: Probable potassium transport system protein Kup (647 aa).

13 helical membrane-spanning segments follow: residues 32–52, 74–94, 124–144, 166–186, 193–213, 230–250, 271–291, 300–320, 322–342, 361–381, 390–410, 418–438, and 443–463; these read IALM…SPLY, VISM…VLFV, LLII…AIIT, FVLP…KTGT, FGPI…HQVI, FLIE…LVLT, WFFI…AMFL, PFFL…ATAA, VIAS…AILL, IYMP…VLAF, AYGI…AIVM, TILV…FLTA, and IMEG…FLMT.

The protein belongs to the HAK/KUP transporter (TC 2.A.72) family.

It is found in the cell inner membrane. It carries out the reaction K(+)(in) + H(+)(in) = K(+)(out) + H(+)(out). Its function is as follows. Transport of potassium into the cell. Likely operates as a K(+):H(+) symporter. The chain is Probable potassium transport system protein Kup from Polynucleobacter asymbioticus (strain DSM 18221 / CIP 109841 / QLW-P1DMWA-1) (Polynucleobacter necessarius subsp. asymbioticus).